We begin with the raw amino-acid sequence, 869 residues long: Aconitate hydratase A (869 aa).

[4Fe-4S] cluster contacts are provided by C411, C477, and C480.

The protein belongs to the aconitase/IPM isomerase family. As to quaternary structure, monomer. The cofactor is [4Fe-4S] cluster.

It carries out the reaction citrate = D-threo-isocitrate. The catalysed reaction is (2S,3R)-3-hydroxybutane-1,2,3-tricarboxylate = 2-methyl-cis-aconitate + H2O. It participates in carbohydrate metabolism; tricarboxylic acid cycle; isocitrate from oxaloacetate: step 2/2. It functions in the pathway organic acid metabolism; propanoate degradation. In terms of biological role, involved in the catabolism of short chain fatty acids (SCFA) via the tricarboxylic acid (TCA)(acetyl degradation route) and the 2-methylcitrate cycle I (propionate degradation route). Catalyzes the reversible isomerization of citrate to isocitrate via cis-aconitate. Could catalyze the hydration of 2-methyl-cis-aconitate to yield (2S,3R)-2-methylisocitrate. The apo form of AcnA functions as a RNA-binding regulatory protein. In Cupriavidus necator (Alcaligenes eutrophus), this protein is Aconitate hydratase A.